The primary structure comprises 189 residues: Peptidyl-tRNA hydrolase (189 aa).

Residue His-15 coordinates tRNA. His-20 acts as the Proton acceptor in catalysis. TRNA contacts are provided by Phe-66, Asn-68, and Asn-114.

Belongs to the PTH family. Monomer.

It localises to the cytoplasm. The enzyme catalyses an N-acyl-L-alpha-aminoacyl-tRNA + H2O = an N-acyl-L-amino acid + a tRNA + H(+). Functionally, hydrolyzes ribosome-free peptidyl-tRNAs (with 1 or more amino acids incorporated), which drop off the ribosome during protein synthesis, or as a result of ribosome stalling. Its function is as follows. Catalyzes the release of premature peptidyl moieties from peptidyl-tRNA molecules trapped in stalled 50S ribosomal subunits, and thus maintains levels of free tRNAs and 50S ribosomes. This is Peptidyl-tRNA hydrolase from Streptococcus equi subsp. equi (strain 4047).